The following is a 138-amino-acid chain: Small ribosomal subunit protein bS6 (138 aa).

The tract at residues 100-138 is disordered; the sequence is SPLAKGREEDDSDSSARRARDDSDDDGDDDEDDRRASAD. The segment covering 121–131 has biased composition (acidic residues); it reads DSDDDGDDDED.

This sequence belongs to the bacterial ribosomal protein bS6 family.

Binds together with bS18 to 16S ribosomal RNA. The polypeptide is Small ribosomal subunit protein bS6 (Thioalkalivibrio sulfidiphilus (strain HL-EbGR7)).